Reading from the N-terminus, the 367-residue chain is NAD(P)H-quinone oxidoreductase subunit 1, chloroplastic (367 aa).

8 helical membrane-spanning segments follow: residues 29 to 49 (WIPL…LVVV), 96 to 116 (VLLF…SYLI), 128 to 148 (INLG…GLLM), 176 to 196 (LALC…IDIV), 204 to 224 (ILGW…IAAL), 266 to 286 (LVSA…PIPI), 304 to 324 (VISA…FLFL), and 347 to 367 (FLLP…IALL).

It belongs to the complex I subunit 1 family. NDH is composed of at least 16 different subunits, 5 of which are encoded in the nucleus.

It is found in the plastid. It localises to the chloroplast thylakoid membrane. The catalysed reaction is a plastoquinone + NADH + (n+1) H(+)(in) = a plastoquinol + NAD(+) + n H(+)(out). It catalyses the reaction a plastoquinone + NADPH + (n+1) H(+)(in) = a plastoquinol + NADP(+) + n H(+)(out). Its function is as follows. NDH shuttles electrons from NAD(P)H:plastoquinone, via FMN and iron-sulfur (Fe-S) centers, to quinones in the photosynthetic chain and possibly in a chloroplast respiratory chain. The immediate electron acceptor for the enzyme in this species is believed to be plastoquinone. Couples the redox reaction to proton translocation, and thus conserves the redox energy in a proton gradient. This is NAD(P)H-quinone oxidoreductase subunit 1, chloroplastic from Mesostigma viride (Green alga).